Consider the following 550-residue polypeptide: Medium-chain acyl-CoA ligase Mig (550 aa).

The first 19 residues, 1 to 19 (MSDTTTAFTVPAVAKAVAA), serve as a signal peptide directing secretion.

It belongs to the ATP-dependent AMP-binding enzyme family.

The protein resides in the secreted. The protein localises to the cell wall. The enzyme catalyses a medium-chain fatty acid + ATP + CoA = a medium-chain fatty acyl-CoA + AMP + diphosphate. The catalysed reaction is hexanoate + ATP + CoA = hexanoyl-CoA + AMP + diphosphate. It catalyses the reaction heptanoate + ATP + CoA = heptanoyl-CoA + AMP + diphosphate. It carries out the reaction octanoate + ATP + CoA = octanoyl-CoA + AMP + diphosphate. The enzyme catalyses decanoate + ATP + CoA = decanoyl-CoA + AMP + diphosphate. The catalysed reaction is dodecanoate + ATP + CoA = dodecanoyl-CoA + AMP + diphosphate. It catalyses the reaction tetradecanoate + ATP + CoA = tetradecanoyl-CoA + AMP + diphosphate. It carries out the reaction (9Z)-octadecenoate + ATP + CoA = (9Z)-octadecenoyl-CoA + AMP + diphosphate. The enzyme catalyses (9Z,12Z,15Z)-octadecatrienoate + ATP + CoA = (9Z,12Z,15Z)-octadecatrienoyl-CoA + AMP + diphosphate. The catalysed reaction is (5Z,8Z,11Z,14Z)-eicosatetraenoate + ATP + CoA = (5Z,8Z,11Z,14Z)-eicosatetraenoyl-CoA + AMP + diphosphate. It functions in the pathway lipid metabolism; fatty acid metabolism. With respect to regulation, inhibited by 2-hydroxydodecanoic acid, a typical inhibitor of medium-chain acyl-CoA synthetases. Catalyzes the activation of medium-chain fatty acids as acyl-coenzyme A (acyl-CoA). Shows maximal activity with saturated fatty acids of medium-chain length between C6 and C12. Has lower activity with tridecanoic acid (C13), tetradecanoic acid (C14) and with unsaturated fatty acids like oleic acid (C18:1), linolenic acid (C18:3) and arachidonic acid (C20:4). Shows weak activity with some aromatic carbon acids. Involved in the metabolism of fatty acid during mycobacterial survival in macrophages. This is Medium-chain acyl-CoA ligase Mig from Mycobacterium avium.